The following is a 696-amino-acid chain: MARLVAVCRDGEEEFPFERRQIPLYIDDTLTMVMEFPDNVLNLDGHQNNGAQLKQFIQRHSMLKQQDLSIAMVVTSREVLSALSQLVPCVGCRRSVERLFSQLVESGNPALEPLTVGPKGVLSLTRSCMTDAKKLYTLFYVHGSKLNDMIDAIPKSKKNKRCQLHSLDTHKPKPLGGCWMDVWELMSQECRDEVVLIDSSCLLETLETYLRKHRFCTDCKNKVLRAYNILIGELDCSKEKGYCAALYEGLRCCPHERHIHVCCETDFIAHLLGRAEPEFAGGRRERHAKTIDIAQEEVLTCLGIHLYERLHRIWQKLRAEEQTWQMLFYLGVDALRKSFEMTVEKVQGISRLEQLCEEFSEEERVRELKQEKKRQKRKNRRKNKCVCDSPASLHTADEKAVSQEKETDFMENSCKACGSTEDGNTCVEVIVTNENTSCTCPSSGNLLGSPKIKKGMSPHCNGSDCGYSSSMEGSETGSREGSDVACTEGICNHDEHGEDPCVHHCEDKEDDGDSCVECWANSEENNTKGKNKKKKKKSKMLKCDEHIQKLGSCITDPGNRETSGNTMHTVFHRDKTKDAHPESCCSTEKGGQPLPWFEHRKNVPQFTEPTEMSFGPDSGKGAKSLVELLDESECTSDEEIFISQDEIQSFMANNQSFYSNREQYRQHLKEKFNKYCRLNDHKRPVCSGWLTTAGAN.

S360 bears the Phosphoserine mark.

In terms of assembly, interacts with GGN.

The protein localises to the cytoplasmic vesicle. Its function is as follows. May be involved in spermatogenesis. This chain is Gametogenetin-binding protein 2 (Ggnbp2), found in Rattus norvegicus (Rat).